The following is a 378-amino-acid chain: tRNA-specific 2-thiouridylase MnmA (378 aa).

Residues 6 to 13 and L32 contribute to the ATP site; that span reads AMSGGVDS. Residue C101 is the Nucleophile of the active site. The cysteines at positions 101 and 199 are disulfide-linked. G125 contributes to the ATP binding site. The interaction with tRNA stretch occupies residues 148-150; it reads KDQ. The Cysteine persulfide intermediate role is filled by C199.

This sequence belongs to the MnmA/TRMU family.

The protein resides in the cytoplasm. It carries out the reaction S-sulfanyl-L-cysteinyl-[protein] + uridine(34) in tRNA + AH2 + ATP = 2-thiouridine(34) in tRNA + L-cysteinyl-[protein] + A + AMP + diphosphate + H(+). In terms of biological role, catalyzes the 2-thiolation of uridine at the wobble position (U34) of tRNA, leading to the formation of s(2)U34. This is tRNA-specific 2-thiouridylase MnmA from Renibacterium salmoninarum (strain ATCC 33209 / DSM 20767 / JCM 11484 / NBRC 15589 / NCIMB 2235).